We begin with the raw amino-acid sequence, 568 residues long: Urease subunit alpha (568 aa).

The Urease domain maps to 130–568 (GGIDTHIHFI…LPMAQRYFLF (439 aa)). Residues histidine 135, histidine 137, and lysine 218 each coordinate Ni(2+). Lysine 218 bears the N6-carboxylysine mark. Histidine 220 is a binding site for substrate. Ni(2+) is bound by residues histidine 247 and histidine 273. Histidine 321 acts as the Proton donor in catalysis. Ni(2+) is bound at residue aspartate 361.

This sequence belongs to the metallo-dependent hydrolases superfamily. Urease alpha subunit family. Heterotrimer of UreA (gamma), UreB (beta) and UreC (alpha) subunits. Three heterotrimers associate to form the active enzyme. Ni cation serves as cofactor. Post-translationally, carboxylation allows a single lysine to coordinate two nickel ions.

The protein resides in the cytoplasm. It catalyses the reaction urea + 2 H2O + H(+) = hydrogencarbonate + 2 NH4(+). It participates in nitrogen metabolism; urea degradation; CO(2) and NH(3) from urea (urease route): step 1/1. The sequence is that of Urease subunit alpha from Burkholderia vietnamiensis (strain G4 / LMG 22486) (Burkholderia cepacia (strain R1808)).